An 89-amino-acid polypeptide reads, in one-letter code: Small ribosomal subunit protein uS15 (89 aa).

A compositionally biased stretch (basic and acidic residues) spans 1 to 10 (MSLDTTEKQE). A disordered region spans residues 1 to 23 (MSLDTTEKQELINAHQTHATDTG). Over residues 14 to 23 (AHQTHATDTG) the composition is skewed to polar residues.

The protein belongs to the universal ribosomal protein uS15 family. In terms of assembly, part of the 30S ribosomal subunit. Forms a bridge to the 50S subunit in the 70S ribosome, contacting the 23S rRNA.

In terms of biological role, one of the primary rRNA binding proteins, it binds directly to 16S rRNA where it helps nucleate assembly of the platform of the 30S subunit by binding and bridging several RNA helices of the 16S rRNA. Forms an intersubunit bridge (bridge B4) with the 23S rRNA of the 50S subunit in the ribosome. This chain is Small ribosomal subunit protein uS15, found in Synechococcus sp. (strain WH7803).